The sequence spans 378 residues: Cell surface mannoprotein MP65 (378 aa).

The signal sequence occupies residues 1–32 (MLFKSFVTFTVLANALAAPLAHQHHQHKEEKR). Positions 67–124 (VSVSVNTEPPQNHPTTTQDVASASTYPSSTDGSAASSSAAASSSSQAGSEPSGGVGSG) are disordered. The segment covering 72–93 (NTEPPQNHPTTTQDVASASTYP) has biased composition (polar residues). Residues 94 to 116 (SSTDGSAASSSAAASSSSQAGSE) show a composition bias toward low complexity. E316 functions as the Nucleophile in the catalytic mechanism.

This sequence belongs to the glycosyl hydrolase 17 family. Component of a multiprotein complex of 250 kDa composed of at least HYR1, MP65, and PRA1. Post-translationally, glycosylated protein with a polysaccharide moiety composed exclusively of mannose and glucose at a ratio of 12.7 to 1. Contributes highly to the carbohydrate component of the matrix. Treatment with tunicamycin impairs glycosylation.

The protein localises to the secreted. Its subcellular location is the cell wall. Its function is as follows. Surface mannoprotein required for hyphal morphogenesis, surface adherence, and pathogenicity. Contributes in a high proportion to the carbohydrate component of the matrix due to high levels of glycosylation and may play important roles during biofilm development and maintenance. Acts as a major antigen target of host cell-mediated immune response. Induces extensive T-cell proliferation of human peripheral blood mononuclear cells. Facilitates host dendritic cells maturation and promotes cytokine production through its glycosylated portion while its protein core is essentially involved in induction of T-cell response. The polypeptide is Cell surface mannoprotein MP65 (MP65) (Candida albicans (strain SC5314 / ATCC MYA-2876) (Yeast)).